The following is a 68-amino-acid chain: Large ribosomal subunit protein uL29 (68 aa).

Belongs to the universal ribosomal protein uL29 family.

In Geobacillus sp. (strain WCH70), this protein is Large ribosomal subunit protein uL29.